Consider the following 251-residue polypeptide: Anamorsin homolog (251 aa).

The interval 1–154 (MINFSNTLVI…AENPDFNKSD (154 aa)) is N-terminal SAM-like domain. The linker stretch occupies residues 155 to 167 (DDNNLVSSDEEIY). Residues cysteine 170, cysteine 181, cysteine 184, and cysteine 186 each coordinate [2Fe-2S] cluster. A fe-S binding site A region spans residues 170–186 (CEDKKKVVNRVCDNCTC). 4 residues coordinate [4Fe-4S] cluster: cysteine 216, cysteine 219, cysteine 227, and cysteine 230. Short sequence motifs (cx2C motif) lie at residues 216 to 219 (CGNC) and 227 to 230 (CGSC). The interval 216 to 230 (CGNCYLGDAFRCGSC) is fe-S binding site B.

Belongs to the anamorsin family. Monomer. [2Fe-2S] cluster serves as cofactor. It depends on [4Fe-4S] cluster as a cofactor.

Its subcellular location is the cytoplasm. The protein resides in the mitochondrion intermembrane space. In terms of biological role, component of the cytosolic iron-sulfur (Fe-S) protein assembly (CIA) machinery. Required for the maturation of extramitochondrial Fe-S proteins. Part of an electron transfer chain functioning in an early step of cytosolic Fe-S biogenesis, facilitating the de novo assembly of a [4Fe-4S] cluster on the cytosolic Fe-S scaffold complex. Electrons are transferred from NADPH via a FAD- and FMN-containing diflavin oxidoreductase. Together with the diflavin oxidoreductase, also required for the assembly of the diferric tyrosyl radical cofactor of ribonucleotide reductase (RNR), probably by providing electrons for reduction during radical cofactor maturation in the catalytic small subunit. The polypeptide is Anamorsin homolog (Plasmodium yoelii yoelii).